Consider the following 209-residue polypeptide: dITP/XTP pyrophosphatase (209 aa).

Position 7–12 (7–12) interacts with substrate; that stretch reads SSHGYK. Catalysis depends on Asp-70, which acts as the Proton acceptor. Asp-70 contacts Mg(2+). Residues Ser-71, 154–157, Lys-177, and 182–183 contribute to the substrate site; these read FGYD and HR.

Belongs to the HAM1 NTPase family. In terms of assembly, homodimer. The cofactor is Mg(2+).

It catalyses the reaction XTP + H2O = XMP + diphosphate + H(+). The enzyme catalyses dITP + H2O = dIMP + diphosphate + H(+). It carries out the reaction ITP + H2O = IMP + diphosphate + H(+). Functionally, pyrophosphatase that catalyzes the hydrolysis of nucleoside triphosphates to their monophosphate derivatives, with a high preference for the non-canonical purine nucleotides XTP (xanthosine triphosphate), dITP (deoxyinosine triphosphate) and ITP. Seems to function as a house-cleaning enzyme that removes non-canonical purine nucleotides from the nucleotide pool, thus preventing their incorporation into DNA/RNA and avoiding chromosomal lesions. The polypeptide is dITP/XTP pyrophosphatase (Chlamydia trachomatis serovar A (strain ATCC VR-571B / DSM 19440 / HAR-13)).